The primary structure comprises 434 residues: Histidinol dehydrogenase (434 aa).

Residues E260 and H263 each coordinate Zn(2+). Residues E330 and H331 each act as proton acceptor in the active site. Zn(2+) is bound at residue H423.

This sequence belongs to the histidinol dehydrogenase family. Requires Zn(2+) as cofactor.

The enzyme catalyses L-histidinol + 2 NAD(+) + H2O = L-histidine + 2 NADH + 3 H(+). The protein operates within amino-acid biosynthesis; L-histidine biosynthesis; L-histidine from 5-phospho-alpha-D-ribose 1-diphosphate: step 9/9. In terms of biological role, catalyzes the sequential NAD-dependent oxidations of L-histidinol to L-histidinaldehyde and then to L-histidine. The protein is Histidinol dehydrogenase (hisD) of Synechocystis sp. (strain ATCC 27184 / PCC 6803 / Kazusa).